An 867-amino-acid chain; its full sequence is Probable alpha,alpha-trehalose-phosphate synthase [UDP-forming] 9 (867 aa).

At Ser5 the chain carries Phosphoserine. Thr32 bears the Phosphothreonine mark. The tract at residues 59 to 546 (ERKIIVANML…AKSFMQDLER (488 aa)) is glycosyltransferase.

This sequence in the N-terminal section; belongs to the glycosyltransferase 20 family. The protein in the C-terminal section; belongs to the trehalose phosphatase family.

It catalyses the reaction D-glucose 6-phosphate + UDP-alpha-D-glucose = alpha,alpha-trehalose 6-phosphate + UDP + H(+). The sequence is that of Probable alpha,alpha-trehalose-phosphate synthase [UDP-forming] 9 (TPS9) from Arabidopsis thaliana (Mouse-ear cress).